The sequence spans 340 residues: Ribosomal RNA small subunit methyltransferase C (340 aa).

Belongs to the methyltransferase superfamily. RsmC family. In terms of assembly, monomer.

The protein resides in the cytoplasm. It catalyses the reaction guanosine(1207) in 16S rRNA + S-adenosyl-L-methionine = N(2)-methylguanosine(1207) in 16S rRNA + S-adenosyl-L-homocysteine + H(+). Functionally, specifically methylates the guanine in position 1207 of 16S rRNA in the 30S particle. In Vibrio cholerae serotype O1 (strain ATCC 39541 / Classical Ogawa 395 / O395), this protein is Ribosomal RNA small subunit methyltransferase C.